The sequence spans 447 residues: Alpha-1,3-mannosyl-glycoprotein 2-beta-N-acetylglucosaminyltransferase (447 aa).

Topologically, residues 1 to 6 (MLKKQS) are cytoplasmic. The chain crosses the membrane as a helical; Signal-anchor for type II membrane protein span at residues 7 to 29 (AGLVLWGAIIFVGWNALLLLFFW). Topologically, residues 30-447 (TRPAPGRLPS…TWNGYDPSWN (418 aa)) are lumenal. The cysteines at positions 115 and 145 are disulfide-linked. Residues Arg117, Asp144, His190, and Asp212 each coordinate substrate. Asp213 contributes to the Mn(2+) binding site. Cys239 and Cys305 form a disulfide bridge. Asp291 (proton acceptor) is an active-site residue. A substrate-binding site is contributed by Ser322.

It belongs to the glycosyltransferase 13 family. In terms of assembly, interacts with MGAT4D. Interacts with BRI3. Mn(2+) serves as cofactor. In terms of tissue distribution, appears to be present in all tissues.

Its subcellular location is the golgi apparatus membrane. The protein resides in the cytoplasm. The protein localises to the perinuclear region. It carries out the reaction N(4)-(alpha-D-Man-(1-&gt;3)-[alpha-D-Man-(1-&gt;3)-[alpha-D-Man-(1-&gt;6)]-alpha-D-Man-(1-&gt;6)]-beta-D-Man-(1-&gt;4)-beta-D-GlcNAc-(1-&gt;4)-beta-D-GlcNAc)-L-asparaginyl-[protein] (N-glucan mannose isomer 5A1,2) + UDP-N-acetyl-alpha-D-glucosamine = N(4)-{beta-D-GlcNAc-(1-&gt;2)-alpha-D-Man-(1-&gt;3)-[alpha-D-Man-(1-&gt;3)-[alpha-D-Man-(1-&gt;6)]-alpha-D-Man-(1-&gt;6)]-beta-D-Man-(1-&gt;4)-beta-D-GlcNAc-(1-&gt;4)-beta-D-GlcNAc}-L-asparaginyl-[protein] + UDP + H(+). It functions in the pathway protein modification; protein glycosylation. Functionally, initiates complex N-linked carbohydrate formation. Essential for the conversion of high-mannose to hybrid and complex N-glycans. The polypeptide is Alpha-1,3-mannosyl-glycoprotein 2-beta-N-acetylglucosaminyltransferase (Mgat1) (Rattus norvegicus (Rat)).